The following is a 286-amino-acid chain: MLRRNLDERDAQTKQLQDAVTNVEKHFGELCQIFAAYVRKTARLRDKADLLVNEINLYASTETPNLKQGLKDFADEFAKLQDYRQAEVERLEAKVVEPLKAYGTIVKMKRDDLKATLTARNREAKQLSQLERTRQRNPSDRHVISQAETELQRATIDATRTSRHLEETIDNFEKQKIKDIKNILSEFITIEMLFHGKALEVFTAAYQNIQNIDEDEDLEVFRNSLYLSDYPSRLDIVRANSKSPLQRSLSTKCTSGTGQISTCRTRKDQQVEDEDDEELDVTEDEN.

A mitochondrion-targeting transit peptide spans 1 to 47 (MLRRNLDERDAQTKQLQDAVTNVEKHFGELCQIFAAYVRKTARLRDK). Residues 10–220 (DAQTKQLQDA…NIDEDEDLEV (211 aa)) are BAR-like. Positions 107-178 (KMKRDDLKAT…IDNFEKQKIK (72 aa)) form a coiled coil. The tract at residues 258-286 (GQISTCRTRKDQQVEDEDDEELDVTEDEN) is disordered. Residues 271–286 (VEDEDDEELDVTEDEN) show a composition bias toward acidic residues.

It belongs to the CIBAR family. As to quaternary structure, homodimer (via BAR-like domain). Heterodimer with FAM92B (via BAR-like domains). Interacts (via BAR-like domain) with CBY1; this interaction is required for targeting FAM92A to centriole and cilium basal body. Interacts (via BAR-like domain) with CBY3; both proteins form a ninefold symmetric structure at the flagellar base; are recruited to the annulus in a mutually dependent manner and regulate annulus positionning. As to expression, expressed in the heart, liver, spleen, lung, kidney, brain and muscle (at protein level). Strongly expressed throughout the developing limb bud, including the progress zone and the apical ectodermal ridge.

It is found in the cytoplasm. Its subcellular location is the cytoskeleton. The protein localises to the microtubule organizing center. It localises to the centrosome. The protein resides in the centriole. It is found in the cilium basal body. Its subcellular location is the cell projection. The protein localises to the cilium. It localises to the nucleus. The protein resides in the mitochondrion inner membrane. It is found in the flagellum. Plays a critical role in regulating mitochondrial ultrastructure and function by maintaining the integrity of mitochondrial morphology, particularly the organization of cristae. Preferentially binds to negatively charged phospholipids like cardiolipin and phosphatidylinositol 4,5-bisphosphate enhancing its interaction with mitochondrial membranes. Induces membrane curvature and tubulation, which are critical for maintaining mitochondrial ultrastructure and the organization of cristae. Plays a crucial role in ciliogenesis. May play a role in limb development through its role in ciliogenesis. Plays a key role in the correct positioning of the annulus, a septin-based ring structure in the sperm flagellum, serving both as a physical barrier and a membrane diffusion barrier that separates the midpiece (MP) from the principal piece (PP). This positioning is essential for proper sperm motility and function. Interacts with CBY3 to form a complex which localizes to the curved membrane region of the flagellar pocket. By doing so, may provide stability and rigidity to the periannular membrane to prevent membrane deformation. This function is crucial for halting annulus migration at the proximal end of the fibrous sheath-containing PP. This is CBY1-interacting BAR domain-containing protein 1 from Mus musculus (Mouse).